We begin with the raw amino-acid sequence, 578 residues long: Peptidyl-prolyl cis-trans isomerase-like 2 (578 aa).

The region spanning 40 to 114 (RRLPFNFCAA…SDSLGAGLSD (75 aa)) is the U-box domain. Positions 240–260 (KAREQGGDVNRSSTALTKPTG) are disordered. Residues 321–475 (ATGFARMETN…NKILIKDIVI (155 aa)) enclose the PPIase cyclophilin-type domain. Positions 505–578 (GTDDDKTTWT…GGGFGNFDNW (74 aa)) are disordered. Residues 538–548 (KTTTQQSTPTV) show a composition bias toward polar residues. Residues 551–560 (ADLEDVDTWE) show a composition bias toward acidic residues. A compositionally biased stretch (gly residues) spans 569–578 (GGGFGNFDNW).

The protein belongs to the cyclophilin-type PPIase family. PPIL2 subfamily.

It localises to the nucleus. It carries out the reaction [protein]-peptidylproline (omega=180) = [protein]-peptidylproline (omega=0). It catalyses the reaction S-ubiquitinyl-[E2 ubiquitin-conjugating enzyme]-L-cysteine + [acceptor protein]-L-lysine = [E2 ubiquitin-conjugating enzyme]-L-cysteine + N(6)-ubiquitinyl-[acceptor protein]-L-lysine.. It functions in the pathway protein modification; protein ubiquitination. Its function is as follows. May catalyze the cis-trans isomerization of proline imidic peptide bonds in oligopeptides thereby assisting the folding of proteins. May also function as a chaperone, playing a role in intracellular transport of proteins. May also have a protein ubiquitin ligase activity acting as an E3 ubiquitin protein ligase or as a ubiquitin-ubiquitin ligase promoting elongation of ubiquitin chains on proteins. The sequence is that of Peptidyl-prolyl cis-trans isomerase-like 2 (CYP8) from Gibberella zeae (strain ATCC MYA-4620 / CBS 123657 / FGSC 9075 / NRRL 31084 / PH-1) (Wheat head blight fungus).